Reading from the N-terminus, the 370-residue chain is Adaptive-response sensory kinase SasA (370 aa).

The 214-residue stretch at M152–Q365 folds into the Histidine kinase domain. Residue H155 is modified to Phosphohistidine; by autocatalysis.

As to quaternary structure, homooligomerizes. Interacts with KaiC. Participates in the KaiBC complex, whose core is composed of a KaiC homohexamer and 6 KaiB.

It carries out the reaction ATP + protein L-histidine = ADP + protein N-phospho-L-histidine.. Functionally, member of the two-component regulatory system SasA/RpaA involved in genome-wide circadian gene expression. One of several clock output pathways. Participates in the Kai clock protein complex, the main circadian regulator in cyanobacteria, via its interaction with KaiC. KaiC enhances the autophosphorylation activity of SasA, which then transfers its phosphate group to RpaA to activate it. In addition to its output function, recruits fold-shifted KaiB (KaiB(fs)) to KaiC to cooperatively form the KaiB(6):KaiC(6) complex (independent of SasA kinase activity). Required for robustness of the circadian rhythm of gene expression and is involved in clock output, also required for adaptation to light/dark cycles. This is Adaptive-response sensory kinase SasA from Prochlorococcus marinus (strain MIT 9313).